Consider the following 339-residue polypeptide: Phosphoribosylformylglycinamidine cyclo-ligase (339 aa).

It belongs to the AIR synthase family.

It localises to the cytoplasm. The enzyme catalyses 2-formamido-N(1)-(5-O-phospho-beta-D-ribosyl)acetamidine + ATP = 5-amino-1-(5-phospho-beta-D-ribosyl)imidazole + ADP + phosphate + H(+). Its pathway is purine metabolism; IMP biosynthesis via de novo pathway; 5-amino-1-(5-phospho-D-ribosyl)imidazole from N(2)-formyl-N(1)-(5-phospho-D-ribosyl)glycinamide: step 2/2. This is Phosphoribosylformylglycinamidine cyclo-ligase from Methanobrevibacter smithii (strain ATCC 35061 / DSM 861 / OCM 144 / PS).